A 356-amino-acid chain; its full sequence is Glycerol-1-phosphate dehydrogenase [NAD(P)+] (356 aa).

Residues 103–107 and 125–128 each bind NAD(+); these read GRSID and TAAS. Residue Asp-130 participates in substrate binding. Ser-134 contributes to the NAD(+) binding site. Asp-177 is a binding site for substrate. Asp-177 and His-257 together coordinate Zn(2+). His-261 serves as a coordination point for substrate. His-273 serves as a coordination point for Zn(2+).

It belongs to the glycerol-1-phosphate dehydrogenase family. It depends on Zn(2+) as a cofactor.

The protein resides in the cytoplasm. The enzyme catalyses sn-glycerol 1-phosphate + NAD(+) = dihydroxyacetone phosphate + NADH + H(+). It carries out the reaction sn-glycerol 1-phosphate + NADP(+) = dihydroxyacetone phosphate + NADPH + H(+). It participates in membrane lipid metabolism; glycerophospholipid metabolism. Its function is as follows. Catalyzes the NAD(P)H-dependent reduction of dihydroxyacetonephosphate (DHAP or glycerone phosphate) to glycerol 1-phosphate (G1P). The G1P thus generated is used as the glycerophosphate backbone of phospholipids in the cellular membranes of Archaea. The protein is Glycerol-1-phosphate dehydrogenase [NAD(P)+] of Methanosarcina acetivorans (strain ATCC 35395 / DSM 2834 / JCM 12185 / C2A).